A 551-amino-acid chain; its full sequence is Structure-specific endonuclease subunit MUS81 (551 aa).

Disordered regions lie at residues 85–131 and 231–255; these read LASG…AGYW and PEEH…EVGV. A Phosphoserine modification is found at Ser-95. Positions 110–131 are enriched in polar residues; the sequence is VQGSSMPVPTQPQAGSTNAGYW. The segment at 124–243 is interaction with BLM; the sequence is GSTNAGYWPA…HHEESPVPEA (120 aa). Positions 131–230 are winged helix domain (WHD); critical for endonuclease activity; the sequence is WPAQNSGARE…GLSTLNTAFQ (100 aa). In terms of domain architecture, ERCC4 spans 270 to 372; the sequence is LLCVDIGETR…HRIYLVEEHG (103 aa). Catalysis depends on residues Asp-274, Glu-277, and Asp-307. The Mg(2+) site is built by Asp-274, Glu-277, Asp-307, Glu-333, and Arg-334. The segment at 471–545 is helix-hairpin-helix (2HhH); involved in DNA recognition and bending; it reads VREVFARQLM…LSRTLYQLYC (75 aa).

Belongs to the XPF family. Part of the heterodimeric DNA structure-specific endonuclease complex MUS81-EME1. Part of the heterodimeric DNA structure-specific endonuclease complex MUS81-EME2. Interacts with BLM; may stimulate the endonuclease activity of MUS81. Interacts with SLX4/BTBD12; this interaction is direct and links the MUS81-EME1 complex to SLX4, which may coordinate the action of the structure-specific endonuclease during DNA repair. Interacts with DCLRE1B/Apollo. Interacts with RECQL5; this interaction stimulates mitotic DNA synthesis. Interacts with CHEK2. It depends on Mg(2+) as a cofactor.

Its subcellular location is the nucleus. It is found in the nucleolus. In terms of biological role, catalytic subunit of two functionally distinct, structure-specific, heterodimeric DNA endonucleases MUS81-EME1 and MUS81-EME2 that are involved in the maintenance of genome stability. Both endonucleases have essentially the same substrate specificity though MUS81-EME2 is more active than its MUS81-EME1 counterpart. Both cleave 3'-flaps and nicked Holliday junctions, and exhibit limited endonuclease activity with 5' flaps and nicked double-stranded DNAs. MUS81-EME2 which is active during the replication of DNA is more specifically involved in replication fork processing. Replication forks frequently encounter obstacles to their passage, including DNA base lesions, DNA interstrand cross-links, difficult-to-replicate sequences, transcription bubbles, or tightly bound proteins. One mechanism for the restart of a stalled replication fork involves nucleolytic cleavage mediated by the MUS81-EME2 endonuclease. By acting upon the stalled fork, MUS81-EME2 generates a DNA double-strand break (DSB) that can be repaired by homologous recombination, leading to the restoration of an active fork. MUS81-EME2 could also function in telomere maintenance. MUS81-EME1, on the other hand, is active later in the cell cycle and functions in the resolution of mitotic recombination intermediates including the Holliday junctions, the four-way DNA intermediates that form during homologous recombination. In Rattus norvegicus (Rat), this protein is Structure-specific endonuclease subunit MUS81.